Here is a 387-residue protein sequence, read N- to C-terminus: Muscleblind-like protein 1 (387 aa).

Phosphothreonine is present on T6. C3H1-type zinc fingers lie at residues W13–K41, N47–P73, T178–D206, and D214–A240.

This sequence belongs to the muscleblind family. Interacts with DDX1 and YBX1. Interacts with HNRNPH1; the interaction in RNA-independent. Interacts with RBPMS; the interaction allows cooperative assembly of RNA-bound stable cell-specific alternative splicing regulatory complexes.

Its subcellular location is the nucleus. It is found in the cytoplasm. The protein resides in the cytoplasmic granule. Its function is as follows. Mediates pre-mRNA alternative splicing regulation. Acts either as activator or repressor of splicing on specific pre-mRNA targets. Inhibits cardiac troponin-T (TNNT2) pre-mRNA exon inclusion but induces insulin receptor (IR) pre-mRNA exon inclusion in muscle. Antagonizes the alternative splicing activity pattern of CELF proteins. Regulates the TNNT2 exon 5 skipping through competition with U2AF2. Inhibits the formation of the spliceosome A complex on intron 4 of TNNT2 pre-mRNA. Binds to the stem-loop structure within the polypyrimidine tract of TNNT2 intron 4 during spliceosome assembly. Binds to the 5'-YGCU(U/G)Y-3'consensus sequence. Binds to the IR RNA. Binds to expanded CUG repeat RNA, which folds into a hairpin structure containing GC base pairs and bulged, unpaired U residues. Together with RNA binding proteins RBPMS and RBFOX2, activates vascular smooth muscle cells alternative splicing events. Regulates NCOR2 alternative splicing. The sequence is that of Muscleblind-like protein 1 from Rattus norvegicus (Rat).